We begin with the raw amino-acid sequence, 313 residues long: Dihydroorotate dehydrogenase (fumarate) (313 aa).

FMN contacts are provided by residues A20 and K44 to S45. Substrate-binding positions include K44, N68 to L72, and N128. N128 serves as a coordination point for FMN. The active-site Nucleophile is the C131. N133 is a substrate binding site. Residues K165 and V194 each coordinate FMN. N195–S196 is a substrate binding site. FMN contacts are provided by residues G223, C249, C249 to G251, and G272 to T273.

Belongs to the dihydroorotate dehydrogenase family. Type 1 subfamily. As to quaternary structure, homodimer. FMN is required as a cofactor.

Its subcellular location is the cytoplasm. The enzyme catalyses (S)-dihydroorotate + fumarate = orotate + succinate. It participates in pyrimidine metabolism; UMP biosynthesis via de novo pathway. Functionally, catalyzes the conversion of dihydroorotate to orotate with fumarate as the electron acceptor. Molecular oxygen can replace fumarate in vitro. The sequence is that of Dihydroorotate dehydrogenase (fumarate) from Trypanosoma brucei brucei (strain 927/4 GUTat10.1).